The following is a 418-amino-acid chain: Tektin-1 (418 aa).

Coiled coils occupy residues 21–84 (KNQY…LEQL), 268–308 (LKET…DQEG), and 336–383 (RLIK…ENTI). The interval 399 to 418 (PRDGDDHGEWAGGSHPEAVC) is disordered.

It belongs to the tektin family. As to quaternary structure, microtubule inner protein component of sperm flagellar doublet microtubules. Post-translationally, ubiquitinated, leading to its degradation. Deubiquitinated by USP16, promoting its stability. In terms of tissue distribution, expressed in trachea multiciliated cells.

It is found in the cytoplasm. The protein localises to the cytoskeleton. It localises to the cilium axoneme. Its subcellular location is the flagellum axoneme. Functionally, microtubule inner protein (MIP) part of the dynein-decorated doublet microtubules (DMTs) in cilia and flagellar axoneme. Forms filamentous polymers in the walls of ciliary and flagellar microtubules. This Bos taurus (Bovine) protein is Tektin-1 (TEKT1).